A 304-amino-acid chain; its full sequence is Deoxyribonuclease-1-like 1 (304 aa).

An N-terminal signal peptide occupies residues 1 to 24; it reads MPYMAMHGLTVALLLIFLAGGTEA. N-linked (GlcNAc...) asparagine glycosylation occurs at Asn92. Glu103 is a catalytic residue. The N-linked (GlcNAc...) asparagine glycan is linked to Asn123. Residue His154 is part of the active site. Cysteines 193 and 230 form a disulfide. N-linked (GlcNAc...) asparagine glycosylation is present at Asn229.

Belongs to the DNase I family.

It localises to the endoplasmic reticulum. This chain is Deoxyribonuclease-1-like 1 (DNASE1L1), found in Cricetulus griseus (Chinese hamster).